The following is a 73-amino-acid chain: Large ribosomal subunit protein uL29 (73 aa).

This sequence belongs to the universal ribosomal protein uL29 family.

In Saccharolobus solfataricus (strain ATCC 35092 / DSM 1617 / JCM 11322 / P2) (Sulfolobus solfataricus), this protein is Large ribosomal subunit protein uL29 (rpl29).